A 409-amino-acid chain; its full sequence is Elongation factor Tu (409 aa).

A tr-type G domain is found at Lys-10–Glu-214. A G1 region spans residues Gly-19–Thr-26. Gly-19–Thr-26 provides a ligand contact to GTP. Thr-26 contacts Mg(2+). The interval Gly-60 to Asn-64 is G2. The interval Asp-81–Gly-84 is G3. GTP is bound by residues Asp-81 to His-85 and Asn-136 to Asp-139. Residues Asn-136 to Asp-139 are G4. The segment at Ser-174 to Lys-176 is G5.

The protein belongs to the TRAFAC class translation factor GTPase superfamily. Classic translation factor GTPase family. EF-Tu/EF-1A subfamily. As to quaternary structure, monomer.

The protein resides in the cytoplasm. It carries out the reaction GTP + H2O = GDP + phosphate + H(+). In terms of biological role, GTP hydrolase that promotes the GTP-dependent binding of aminoacyl-tRNA to the A-site of ribosomes during protein biosynthesis. The sequence is that of Elongation factor Tu from Microcystis aeruginosa (strain NIES-843 / IAM M-2473).